A 35-amino-acid polypeptide reads, in one-letter code: Alpha-amanitin proprotein 2 (35 aa).

The propeptide occupies 1-10 (MFDTNSTRLP). (3R,4R)-4,5-dihydroxyisoleucine; in form alpha-amanitin is present on I11. I11 bears the (3R,4S)-4-hydroxyisoleucine; in form gamma-amanitin mark. Residues 11–18 (IWGIGCNP) constitute a cross-link (cyclopeptide (Ile-Pro)). Residues 12–16 (WGIGC) constitute a cross-link (2'-cysteinyl-6'-hydroxytryptophan sulfoxide (Trp-Cys)). P18 carries the 4-hydroxyproline modification. Residues 19-35 (WTAEHVDQTLVSGNDIC) constitute a propeptide that is removed on maturation.

The protein belongs to the MSDIN fungal toxin family. Processed by the macrocyclase-peptidase enzyme POPB to yield a toxic bicyclic octapeptide. POPB first removes 10 residues from the N-terminus. Conformational trapping of the remaining peptide forces the enzyme to release this intermediate rather than proceed to macrocyclization. The enzyme rebinds the remaining peptide in a different conformation and catalyzes macrocyclization of the N-terminal 8 residues.

Its function is as follows. Major toxin belonging to the bicyclic octapeptides amatoxins that acts by binding non-competitively to RNA polymerase II and greatly slowing the elongation of transcripts from target promoters. In Galerina marginata (strain CBS 339.88), this protein is Alpha-amanitin proprotein 2.